Here is a 424-residue protein sequence, read N- to C-terminus: Proline--tRNA ligase (424 aa).

This sequence belongs to the class-II aminoacyl-tRNA synthetase family. ProS type 2 subfamily. In terms of assembly, homodimer.

The protein resides in the cytoplasm. It catalyses the reaction tRNA(Pro) + L-proline + ATP = L-prolyl-tRNA(Pro) + AMP + diphosphate. Functionally, catalyzes the attachment of proline to tRNA(Pro) in a two-step reaction: proline is first activated by ATP to form Pro-AMP and then transferred to the acceptor end of tRNA(Pro). The sequence is that of Proline--tRNA ligase from Ehrlichia chaffeensis (strain ATCC CRL-10679 / Arkansas).